A 665-amino-acid polypeptide reads, in one-letter code: GRB2-associated-binding protein 2 (665 aa).

Serine 2 carries the post-translational modification Phosphoserine. The PH domain occupies 8–119 (DVVCTGWLRK…WVQSICQICG (112 aa)). Positions 131–184 (RNLSSASHGPRSSPAEFSSSQHLLRERKSSAPSHSSQPTLFTFEPPVSSHMQPT) are disordered. Serine 135, serine 142, serine 143, serine 149, serine 150, serine 160, serine 165, serine 211, serine 220, and serine 261 each carry phosphoserine. Positions 160 to 170 (SAPSHSSQPTL) are enriched in polar residues. A Phosphothreonine modification is found at threonine 262. Position 263 is a phosphotyrosine (tyrosine 263). A Phosphothreonine modification is found at threonine 275. Residues serine 278 and serine 282 each carry the phosphoserine modification. At threonine 284 the chain carries Phosphothreonine. The residue at position 290 (tyrosine 290) is a Phosphotyrosine. Threonine 328 carries the post-translational modification Phosphothreonine. A disordered region spans residues 338 to 396 (VATPGDSAIAPPPRPPKPSQAETSQWGSIQQRPPISENSRSVAATIPRRNTLPAMDNSR). The SH3-binding motif lies at 348-355 (PPPRPPKP). Residues 357–379 (QAETSQWGSIQQRPPISENSRSV) are compositionally biased toward polar residues. A Phosphoserine modification is found at serine 365. A phosphothreonine mark is found at threonine 382 and threonine 388. A Phosphoserine modification is found at serine 402. Threonine 405 bears the Phosphothreonine mark. The segment at 408–445 (YPARGSGESASWSAEPPGKTAVGRSNSASSDDNYVPMN) is disordered. Serine 420 carries the post-translational modification Phosphoserine. The span at 430–439 (GRSNSASSDD) shows a compositional bias: polar residues. Tyrosine 441 is modified (phosphotyrosine). At serine 469 the chain carries Phosphoserine. The tract at residues 491–517 (PSRGSEIQPPPVNRNLKPDRKAKPTPL) is disordered. The short motif at 499–508 (PPPVNRNLKP) is the SH3-binding element. Serine 532 is subject to Phosphoserine. 2 stretches are compositionally biased toward polar residues: residues 548-566 (SSSQ…STDS) and 578-600 (NPVS…STGS). Disordered regions lie at residues 548–632 (SSSQ…KVDY) and 646–665 (TMQE…GAKL). Serine 612 bears the Phosphoserine mark. Tyrosine 632 is modified (phosphotyrosine). Over residues 646–659 (TMQEWTDVRQSSEP) the composition is skewed to polar residues.

This sequence belongs to the GAB family. As to quaternary structure, part of a complex composed of EEIG1, TNFRSF11A/RANK, PLCG2, GAB2, TEC and BTK; complex formation increases in the presence of TNFSF11/RANKL. Interacts with HCK. Interacts with SHC1; may mediate interaction with receptors. Interacts with SYK. Interacts with PI-3 kinase. Interacts with GRB2 (via SH3 2 domain). Interacts (phosphorylated) with PTPN11. Interacts with TNFRSF11A (via cytoplasmic domain). Interacts (phosphorylated) with 14-3-3 family proteins SFN, YWHAB, YWHAE, YWHAG, YWHAH, YWHAQ and YWHAZ; prevents interaction with GRB2 and attenuates GAB2 signaling. In terms of processing, phosphorylated upon EGF stimulation. Phosphorylated on tyrosine residues by HCK upon IL6 signaling. Phosphorylated on tyrosine residue(s) by the thrombopoietin receptor (TPOR), stem cell factor receptor (SCFR), and T-cell and B-cell antigen receptors, gp130, IL-2R and IL-3R. Phosphorylated upon stimulation of TNFRSF11A/RANK by TNFSF11/RANKL. Dephosphorylated by PTPN11. In terms of tissue distribution, ubiquitously expressed.

Its subcellular location is the cytoplasm. The protein resides in the cell membrane. It is found in the membrane raft. Functionally, adapter protein which acts downstream of several membrane receptors including cytokine, antigen, hormone, cell matrix and growth factor receptors to regulate multiple signaling pathways. Regulates osteoclast differentiation mediating the TNFRSF11A/RANK signaling. In allergic response, it plays a role in mast cells activation and degranulation through PI-3-kinase regulation. Also involved in the regulation of cell proliferation and hematopoiesis. The chain is GRB2-associated-binding protein 2 (Gab2) from Mus musculus (Mouse).